The chain runs to 561 residues: Cloacin (561 aa).

Composition is skewed to gly residues over residues 1–21 (MSGGDGRGPGNSGLGHNGGQA), 29–40 (SGKGGPSSGGGT), and 66–91 (FGNGGSKPGGNGGNSGNHSGSSGGGQ). Disordered stretches follow at residues 1 to 93 (MSGG…GQSS), 254 to 273 (PKGIVAEKGDSRPAGFTAGG), 304 to 326 (VKQRQEEEKRRQQAWDAAHPEEG), 432 to 507 (KAAL…KRAR), and 530 to 561 (RASDGEHLGAFDPKTGKQVKGPDPKRNIKKYL). The tract at residues 1–180 (MSGGDGRGPG…DTVTETPAST (180 aa)) is involved in the translocation of the protein across the cell membrane. Residues 200–420 (DERQHIAVVA…NAKLKAAQAS (221 aa)) are responsible for the receptor binding activity. Composition is skewed to basic and acidic residues over residues 306-326 (QRQEEEKRRQQAWDAAHPEEG) and 440-494 (ESRK…EGKP). The segment at 421 to 561 (LNAMNDALSR…DPKRNIKKYL (141 aa)) is ribonuclease activity. A binding of immunity protein region spans residues 540–561 (FDPKTGKQVKGPDPKRNIKKYL).

Belongs to the cloacin colicin family.

In terms of biological role, inactivates ribosomes by hydrolyzing 16S RNA in 30S ribosomes at a specific site. Functionally, colicins are polypeptide toxins produced by and active against E.coli and closely related bacteria. The polypeptide is Cloacin (ccl) (Escherichia coli).